Reading from the N-terminus, the 221-residue chain is Endo-1,4-beta-xylanase A (221 aa).

The N-terminal stretch at 1–16 (MKFFATIAALVVGAVA) is a signal peptide. The GH11 domain maps to 29 to 221 (PMLIERAGPG…GTGSASVTVS (193 aa)). E114 serves as the catalytic Nucleophile. E208 (proton donor) is an active-site residue.

This sequence belongs to the glycosyl hydrolase 11 (cellulase G) family.

It is found in the secreted. The catalysed reaction is Endohydrolysis of (1-&gt;4)-beta-D-xylosidic linkages in xylans.. It participates in glycan degradation; xylan degradation. In terms of biological role, endo-1,4-beta-xylanase involved in the hydrolysis of xylan, a major structural heterogeneous polysaccharide found in plant biomass representing the second most abundant polysaccharide in the biosphere, after cellulose. In Aureobasidium pullulans (Black yeast), this protein is Endo-1,4-beta-xylanase A (xynA).